Consider the following 213-residue polypeptide: LexA repressor 2 (213 aa).

The segment at residues 27 to 47 (QTEIARAFGFKGVRAAQYHLE) is a DNA-binding region (H-T-H motif). Active-site for autocatalytic cleavage activity residues include Ser-133 and Lys-170.

This sequence belongs to the peptidase S24 family. Homodimer.

The catalysed reaction is Hydrolysis of Ala-|-Gly bond in repressor LexA.. Functionally, represses a number of genes involved in the response to DNA damage (SOS response), including recA and lexA. In the presence of single-stranded DNA, RecA interacts with LexA causing an autocatalytic cleavage which disrupts the DNA-binding part of LexA, leading to derepression of the SOS regulon and eventually DNA repair. This Xanthomonas campestris pv. campestris (strain ATCC 33913 / DSM 3586 / NCPPB 528 / LMG 568 / P 25) protein is LexA repressor 2.